The chain runs to 189 residues: Tumor protein p53-inducible protein 11 (189 aa).

At 1–63 (MAAKQPPPLM…FAVREPLGLR (63 aa)) the chain is on the cytoplasmic side. The residue at position 14 (S14) is a Phosphoserine. The chain crosses the membrane as a helical span at residues 64-84 (VWQFLSAMLFSSVAIMALALP). Residues 85 to 108 (DQLYDAVFDGAEVTSKTPIRLYGG) are Extracellular-facing. The chain crosses the membrane as a helical span at residues 109–129 (ALLSISLIMWNALYTAEKVII). A topological domain (cytoplasmic) is located at residue R130. A helical membrane pass occupies residues 131–151 (WTLLTEACYFGVQSLVVTATL). Topologically, residues 152-155 (AETG) are extracellular. Residues 156–176 (LMSLGTLLLLASRLLFVIVSI) form a helical membrane-spanning segment. The Cytoplasmic portion of the chain corresponds to 177–189 (YYYYQVGRKPKKV).

The protein localises to the membrane. This Rattus norvegicus (Rat) protein is Tumor protein p53-inducible protein 11 (Tp53i11).